A 722-amino-acid chain; its full sequence is Glycine--tRNA ligase beta subunit (722 aa).

The protein belongs to the class-II aminoacyl-tRNA synthetase family. As to quaternary structure, tetramer of two alpha and two beta subunits.

The protein localises to the cytoplasm. The enzyme catalyses tRNA(Gly) + glycine + ATP = glycyl-tRNA(Gly) + AMP + diphosphate. In Xylella fastidiosa (strain Temecula1 / ATCC 700964), this protein is Glycine--tRNA ligase beta subunit.